The sequence spans 100 residues: UPF0213 protein YhbQ (100 aa).

Residues 2–77 form the GIY-YIG domain; the sequence is TPWYLYLIRT…KQLTKRQKER (76 aa).

This sequence belongs to the UPF0213 family.

This chain is UPF0213 protein YhbQ, found in Salmonella arizonae (strain ATCC BAA-731 / CDC346-86 / RSK2980).